Here is a 341-residue protein sequence, read N- to C-terminus: GTPase Obg (341 aa).

Positions 1–159 (MKFVDEALIK…RNLRLELRVL (159 aa)) constitute an Obg domain. The interval 128 to 150 (TRYKSSVNRSPRQTTPGSPGESR) is disordered. The segment covering 129–144 (RYKSSVNRSPRQTTPG) has biased composition (polar residues). Residues 160–334 (ADVGLLGLPN…LCYALMQLID (175 aa)) enclose the OBG-type G domain. Residues 166–173 (GLPNAGKS), 191–195 (FTTLH), 213–216 (DIPG), 283–286 (NKID), and 315–317 (SAI) contribute to the GTP site. Residues Ser173 and Thr193 each coordinate Mg(2+).

The protein belongs to the TRAFAC class OBG-HflX-like GTPase superfamily. OBG GTPase family. As to quaternary structure, monomer. Mg(2+) is required as a cofactor.

The protein localises to the cytoplasm. An essential GTPase which binds GTP, GDP and possibly (p)ppGpp with moderate affinity, with high nucleotide exchange rates and a fairly low GTP hydrolysis rate. Plays a role in control of the cell cycle, stress response, ribosome biogenesis and in those bacteria that undergo differentiation, in morphogenesis control. The protein is GTPase Obg of Legionella pneumophila (strain Lens).